The primary structure comprises 101 residues: MAKKSMKNRELKRQLTVAKFAKKRAELKATIVNLNASPEERFAAVVALQKQPRDASAARLRNRCRLTGRPHGVYRKFGLGRNMLRQAAMRGDVPGLVKASW.

Belongs to the universal ribosomal protein uS14 family. Part of the 30S ribosomal subunit. Contacts proteins S3 and S10.

Functionally, binds 16S rRNA, required for the assembly of 30S particles and may also be responsible for determining the conformation of the 16S rRNA at the A site. This is Small ribosomal subunit protein uS14 from Pseudomonas putida (strain W619).